A 434-amino-acid polypeptide reads, in one-letter code: 26S proteasome regulatory subunit RPN6 (434 aa).

An N-acetylserine modification is found at Ser-2. The PCI domain occupies 235 to 404; that stretch reads AFSYFFESFE…GWLYVYETPN (170 aa).

The protein belongs to the proteasome subunit S9 family. As to quaternary structure, component of the lid subcomplex of the 19S proteasome regulatory particle complex (also named PA700 complex). The 26S proteasome consists of a 20S proteasome core and two 19S regulatory subunits. N-acetylated by NAT1.

Component of the lid subcomplex of the 26S proteasome, a multiprotein complex involved in the ATP-dependent degradation of ubiquitinated proteins. In the complex, RPN6 is required for proteasome assembly. In Saccharomyces cerevisiae (strain ATCC 204508 / S288c) (Baker's yeast), this protein is 26S proteasome regulatory subunit RPN6 (RPN6).